A 339-amino-acid polypeptide reads, in one-letter code: F-box protein At3g22700 (339 aa).

An F-box domain is found at 1 to 49 (MMSNLPLDLVEEILSRVPATSLKRLRSTCRQWNALLKDRRFTEKHFRKA).

The protein is F-box protein At3g22700 of Arabidopsis thaliana (Mouse-ear cress).